Here is a 360-residue protein sequence, read N- to C-terminus: GTP 3',8-cyclase 2 (360 aa).

The region spanning 33–259 (TFGRVANDLR…PDPAPRGSAP (227 aa)) is the Radical SAM core domain. GTP is bound at residue R42. 2 residues coordinate [4Fe-4S] cluster: C49 and C53. Position 55 (Y55) interacts with S-adenosyl-L-methionine. C56 serves as a coordination point for [4Fe-4S] cluster. R93 contacts GTP. G97 lines the S-adenosyl-L-methionine pocket. Residue T124 coordinates GTP. Position 148 (S148) interacts with S-adenosyl-L-methionine. GTP is bound at residue K185. M219 is an S-adenosyl-L-methionine binding site. [4Fe-4S] cluster is bound by residues C287 and C290. Residue 292–294 (RTR) coordinates GTP. Position 304 (C304) interacts with [4Fe-4S] cluster.

The protein belongs to the radical SAM superfamily. MoaA family. Monomer and homodimer. [4Fe-4S] cluster serves as cofactor.

The enzyme catalyses GTP + AH2 + S-adenosyl-L-methionine = (8S)-3',8-cyclo-7,8-dihydroguanosine 5'-triphosphate + 5'-deoxyadenosine + L-methionine + A + H(+). The protein operates within cofactor biosynthesis; molybdopterin biosynthesis. In terms of biological role, catalyzes the cyclization of GTP to (8S)-3',8-cyclo-7,8-dihydroguanosine 5'-triphosphate. The chain is GTP 3',8-cyclase 2 from Mycobacterium bovis (strain ATCC BAA-935 / AF2122/97).